The sequence spans 1357 residues: DNA-directed RNA polymerase subunit beta (1357 aa).

It belongs to the RNA polymerase beta chain family. In terms of assembly, the RNAP catalytic core consists of 2 alpha, 1 beta, 1 beta' and 1 omega subunit. When a sigma factor is associated with the core the holoenzyme is formed, which can initiate transcription.

It carries out the reaction RNA(n) + a ribonucleoside 5'-triphosphate = RNA(n+1) + diphosphate. DNA-dependent RNA polymerase catalyzes the transcription of DNA into RNA using the four ribonucleoside triphosphates as substrates. This Nitrosomonas europaea (strain ATCC 19718 / CIP 103999 / KCTC 2705 / NBRC 14298) protein is DNA-directed RNA polymerase subunit beta.